The chain runs to 95 residues: MTITTEDILDCANLSRLALDEKTAQNYAGNLDKILAMMDILDGVNTDNIKPLANIHEACNELRADIANSDIGRDGFQAVAPMVQDGLYLVPQVIE.

This sequence belongs to the GatC family. As to quaternary structure, heterotrimer of A, B and C subunits.

It catalyses the reaction L-glutamyl-tRNA(Gln) + L-glutamine + ATP + H2O = L-glutaminyl-tRNA(Gln) + L-glutamate + ADP + phosphate + H(+). The enzyme catalyses L-aspartyl-tRNA(Asn) + L-glutamine + ATP + H2O = L-asparaginyl-tRNA(Asn) + L-glutamate + ADP + phosphate + 2 H(+). Functionally, allows the formation of correctly charged Asn-tRNA(Asn) or Gln-tRNA(Gln) through the transamidation of misacylated Asp-tRNA(Asn) or Glu-tRNA(Gln) in organisms which lack either or both of asparaginyl-tRNA or glutaminyl-tRNA synthetases. The reaction takes place in the presence of glutamine and ATP through an activated phospho-Asp-tRNA(Asn) or phospho-Glu-tRNA(Gln). The protein is Glutamyl-tRNA(Gln) amidotransferase subunit C of Moraxella catarrhalis (Branhamella catarrhalis).